Here is a 510-residue protein sequence, read N- to C-terminus: Glutamate decarboxylase (510 aa).

Residue 107–109 coordinates substrate; it reads QLS. K322 is subject to N6-(pyridoxal phosphate)lysine. Substrate is bound at residue R483.

Belongs to the group II decarboxylase family. As to quaternary structure, homodimer. The cofactor is pyridoxal 5'-phosphate. As to expression, expressed in the head (at protein level).

It carries out the reaction L-glutamate + H(+) = 4-aminobutanoate + CO2. Catalyzes the production of GABA. The sequence is that of Glutamate decarboxylase (Gad1) from Drosophila melanogaster (Fruit fly).